Consider the following 185-residue polypeptide: Ribosome-recycling factor (185 aa).

This sequence belongs to the RRF family.

It localises to the cytoplasm. Functionally, responsible for the release of ribosomes from messenger RNA at the termination of protein biosynthesis. May increase the efficiency of translation by recycling ribosomes from one round of translation to another. This chain is Ribosome-recycling factor, found in Geobacillus kaustophilus (strain HTA426).